The sequence spans 86 residues: Insulin (86 aa).

Disulfide bonds link cysteine 7-cysteine 72, cysteine 19-cysteine 85, and cysteine 71-cysteine 76. Residues 33–63 (EAEDPQVGEVELGGGPGLGGLQPLALAGPQQ) constitute a propeptide, c peptide.

Belongs to the insulin family. In terms of assembly, heterodimer of a B chain and an A chain linked by two disulfide bonds.

The protein resides in the secreted. In terms of biological role, insulin decreases blood glucose concentration. It increases cell permeability to monosaccharides, amino acids and fatty acids. It accelerates glycolysis, the pentose phosphate cycle, and glycogen synthesis in liver. The sequence is that of Insulin (INS) from Equus caballus (Horse).